Here is a 379-residue protein sequence, read N- to C-terminus: Copper-containing nitrite reductase (379 aa).

Residues 1–32 constitute a signal peptide (tat-type signal); that stretch reads MSEQFRLTRRSMLAGAAVAGALAPVVTSVAHA. Plastocyanin-like domains lie at 33–214 and 215–379; these read EGGG…YDKV and YYVG…PTSG. Cu cation is bound by residues histidine 134, histidine 139, histidine 174, cysteine 175, histidine 184, methionine 189, and histidine 345.

Belongs to the multicopper oxidase family. In terms of assembly, homotrimer. Cu(2+) serves as cofactor. Requires Cu(+) as cofactor. FAD is required as a cofactor. In terms of processing, predicted to be exported by the Tat system. The position of the signal peptide cleavage has not been experimentally proven.

It localises to the periplasm. The catalysed reaction is nitric oxide + Fe(III)-[cytochrome c] + H2O = Fe(II)-[cytochrome c] + nitrite + 2 H(+). Its pathway is nitrogen metabolism; nitrate reduction (denitrification); dinitrogen from nitrate: step 2/4. This Neorhizobium galegae (Rhizobium galegae) protein is Copper-containing nitrite reductase (nirU).